The chain runs to 135 residues: UPF0299 membrane protein YPK_2559 (135 aa).

The next 3 helical transmembrane spans lie at 30–50 (LLLP…FVLL), 66–86 (LLIR…MQYY), and 93–113 (FGPI…VVAY).

The protein belongs to the UPF0299 family.

It is found in the cell inner membrane. In Yersinia pseudotuberculosis serotype O:3 (strain YPIII), this protein is UPF0299 membrane protein YPK_2559.